A 679-amino-acid chain; its full sequence is Stress-70 protein, mitochondrial (679 aa).

The N-terminal 46 residues, 1-46 (MISASRAAAARLVGAAASRGPTAARHQDSWNGLSHEAFRLVSRRDY), are a transit peptide targeting the mitochondrion. The interaction with NFS1 stretch occupies residues 1–432 (MISASRAAAA…IQGGVLAGDV (432 aa)). Residues Thr-63 and Asn-64 each contribute to the ADP site. Positions 63-431 (TNSCVAVMEG…AIQGGVLAGD (369 aa)) are nucleotide-binding domain (NBD). At Lys-76 the chain carries N6-acetyllysine. Thr-87 is subject to Phosphothreonine. N6-acetyllysine; alternate occurs at positions 135 and 138. An N6-succinyllysine; alternate mark is found at Lys-135 and Lys-138. Lys-143 carries the N6-acetyllysine modification. Lys-206 carries the post-translational modification N6-acetyllysine; alternate. Position 206 is an N6-succinyllysine; alternate (Lys-206). Lys-206 carries the N6-malonyllysine; alternate modification. Lys-234 and Lys-288 each carry N6-acetyllysine. The residue at position 300 (Lys-300) is an N6-acetyllysine; alternate. Position 300 is an N6-succinyllysine; alternate (Lys-300). 3 residues coordinate ADP: Glu-313, Lys-316, and Ser-320. Lys-368 carries the post-translational modification N6-succinyllysine. Gly-388 and Arg-391 together coordinate ADP. At Lys-394 the chain carries N6-succinyllysine. Ser-408 is subject to Phosphoserine. The tract at residues 432–441 (VTDVLLLDVT) is interdomain linker. Positions 432 to 679 (VTDVLLLDVT…QKEDQKEEKQ (248 aa)) are interaction with FXN and ISCU. The tract at residues 442–679 (PLSLGIETLG…QKEDQKEEKQ (238 aa)) is substrate-binding domain (SBD). At Arg-513 the chain carries Omega-N-methylarginine. An N6-acetyllysine; alternate mark is found at Lys-567 and Lys-600. N6-succinyllysine; alternate is present on residues Lys-567 and Lys-600. Lys-610 is modified (N6-succinyllysine). An N6-acetyllysine modification is found at Lys-612. Residue Lys-646 is modified to N6-acetyllysine; alternate. N6-succinyllysine; alternate is present on Lys-646. The tract at residues 656 to 679 (ASEREGSGSSGTGEQKEDQKEEKQ) is disordered. The segment covering 669 to 679 (EQKEDQKEEKQ) has biased composition (basic and acidic residues).

This sequence belongs to the heat shock protein 70 family. As to quaternary structure, interacts strongly with the intermediate form of FXN and weakly with its mature form. Interacts with HSCB. Associates with the mitochondrial contact site and cristae organizing system (MICOS) complex, composed of at least MICOS10/MIC10, CHCHD3/MIC19, CHCHD6/MIC25, APOOL/MIC27, IMMT/MIC60, APOO/MIC23/MIC26 and QIL1/MIC13. This complex was also known under the names MINOS or MitOS complex. The MICOS complex associates with mitochondrial outer membrane proteins SAMM50, MTX1, MTX2 and DNAJC11, mitochondrial inner membrane protein TMEM11 and with HSPA9. Interacts with DNLZ, the interaction is required to prevent self-aggregation. Interacts with TESPA1. Interacts with PDPN. Interacts with NFU1, NFS1 and ISCU. Interacts with TP53; the interaction promotes TP53 degradation. Interacts (via SBD domain) with UBXN2A; the interaction with UBXN2A inhibits HSPA9 interaction with and degradation of TP53, thereby promotes TP53 translocation to the nucleus. Interacts with ITPR1 AND VDAC1; this interaction couples ITPR1 to VDAC1. Component of the TIM23 mitochondrial inner membrane pre-sequence translocase complex.

The protein resides in the mitochondrion. It localises to the nucleus. Its subcellular location is the nucleolus. It is found in the cytoplasm. The protein localises to the mitochondrion matrix. The catalysed reaction is ATP + H2O = ADP + phosphate + H(+). Its activity is regulated as follows. The chaperone activity is regulated by ATP-induced allosteric coupling of the nucleotide-binding (NBD) and substrate-binding (SBD) domains. ATP binding in the NBD leads to a conformational change in the NBD, which is transferred through the interdomain linker (IDL) to the substrate-binding domain (SBD). This elicits a reduced substrate affinity and a faster substrate exchange rate. Upon hydrolysis of ATP to ADP, the protein undergoes a conformational change that increases its affinity for substrate proteins. It cycles through repeated phases of ATP hydrolysis and nucleotide exchange, facilitating repeated cycles of substrate binding and release. Functions in collaboration with co-chaperones. Functions with the co-chaperone, DNLZ, to maintain solubility and regulate ATP hydrolysis. Nucleotide exchange factors, GRPEL1 and GRPEL2, accelerate nucleotide exchange. Its function is as follows. Mitochondrial chaperone that plays a key role in mitochondrial protein import, folding, and assembly. Plays an essential role in the protein quality control system, the correct folding of proteins, the re-folding of misfolded proteins, and the targeting of proteins for subsequent degradation. These processes are achieved through cycles of ATP binding, ATP hydrolysis, and ADP release, mediated by co-chaperones. In mitochondria, it associates with the TIM (translocase of the inner membrane) protein complex to assist in the import and folding of mitochondrial proteins. Plays an important role in mitochondrial iron-sulfur cluster (ISC) biogenesis, interacts with and stabilizes ISC cluster assembly proteins FXN, NFU1, NFS1 and ISCU. Regulates erythropoiesis via stabilization of ISC assembly. Regulates mitochondrial calcium-dependent apoptosis by coupling two calcium channels, ITPR1 and VDAC1, at the mitochondria-associated endoplasmic reticulum (ER) membrane to facilitate calcium transport from the ER lumen to the mitochondria intermembrane space, providing calcium for the downstream calcium channel MCU, which releases it into the mitochondrial matrix. Although primarily located in the mitochondria, it is also found in other cellular compartments. In the cytosol, it associates with proteins involved in signaling, apoptosis, or senescence. It may play a role in cell cycle regulation via its interaction with and promotion of degradation of TP53. May play a role in the control of cell proliferation and cellular aging. Protects against reactive oxygen species (ROS). Extracellular HSPA9 plays a cytoprotective role by preventing cell lysis following immune attack by the membrane attack complex by disrupting formation of the complex. The sequence is that of Stress-70 protein, mitochondrial from Homo sapiens (Human).